The sequence spans 291 residues: Lipoyl synthase 1 (291 aa).

Residues cysteine 34, cysteine 39, cysteine 45, cysteine 60, cysteine 64, cysteine 67, and serine 274 each coordinate [4Fe-4S] cluster. The region spanning 46–263 (FQAGTATFLI…QVYGEELGFL (218 aa)) is the Radical SAM core domain.

This sequence belongs to the radical SAM superfamily. Lipoyl synthase family. [4Fe-4S] cluster serves as cofactor.

The protein resides in the cytoplasm. The enzyme catalyses [[Fe-S] cluster scaffold protein carrying a second [4Fe-4S](2+) cluster] + N(6)-octanoyl-L-lysyl-[protein] + 2 oxidized [2Fe-2S]-[ferredoxin] + 2 S-adenosyl-L-methionine + 4 H(+) = [[Fe-S] cluster scaffold protein] + N(6)-[(R)-dihydrolipoyl]-L-lysyl-[protein] + 4 Fe(3+) + 2 hydrogen sulfide + 2 5'-deoxyadenosine + 2 L-methionine + 2 reduced [2Fe-2S]-[ferredoxin]. It participates in protein modification; protein lipoylation via endogenous pathway; protein N(6)-(lipoyl)lysine from octanoyl-[acyl-carrier-protein]: step 2/2. Functionally, catalyzes the radical-mediated insertion of two sulfur atoms into the C-6 and C-8 positions of the octanoyl moiety bound to the lipoyl domains of lipoate-dependent enzymes, thereby converting the octanoylated domains into lipoylated derivatives. This is Lipoyl synthase 1 from Nostoc sp. (strain PCC 7120 / SAG 25.82 / UTEX 2576).